The primary structure comprises 905 residues: DNA mismatch repair protein MutS (905 aa).

The disordered stretch occupies residues 388-410 (LERPANPEGTYPTDAETSGDTLP). ATP is bound at residue 638-645 (GPNMAGKS). Residues 826–847 (RDAARGTNSAPSRQTLPGLDLP) are disordered. Positions 831-840 (GTNSAPSRQT) are enriched in polar residues.

Belongs to the DNA mismatch repair MutS family.

This protein is involved in the repair of mismatches in DNA. It is possible that it carries out the mismatch recognition step. This protein has a weak ATPase activity. The sequence is that of DNA mismatch repair protein MutS from Nitratidesulfovibrio vulgaris (strain DP4) (Desulfovibrio vulgaris).